Here is a 382-residue protein sequence, read N- to C-terminus: Intermediate transcription factor 3 large subunit (382 aa).

It belongs to the orthopoxvirus OPG150 family. In terms of assembly, heterodimerizes with protein A8 to form the virus intermediate transcription factor (VITF)-3.

Functionally, acts with RNA polymerase to initiate transcription from intermediate gene promoters. The polypeptide is Intermediate transcription factor 3 large subunit (OPG150) (Bos taurus (Bovine)).